A 328-amino-acid chain; its full sequence is Protein FAM76B (328 aa).

Residues 143–232 (KEQRKGLGSS…ITQSMDSGGT (90 aa)) form a disordered region. Residues 148 to 159 (GLGSSHSNSSSL) show a composition bias toward low complexity. Over residues 165–183 (QRHHHHHQHHRHGSSHHKI) the composition is skewed to basic residues. A compositionally biased stretch (polar residues) spans 185 to 201 (GNLSPEQDQGLWKQSIQ). Position 188 is a phosphoserine (Ser188). Over residues 203-213 (ETPKKKPKLET) the composition is skewed to basic and acidic residues. Positions 216-232 (SNGDSSSITQSMDSGGT) are enriched in polar residues. Residues 237 to 316 (LISQLKEEVM…KQVAALSKGK (80 aa)) adopt a coiled-coil conformation.

Belongs to the FAM76 family. Highly expressed in hematopoietic and immune systems including in the thymus, spleen, kidney, and blood vessel.

In terms of biological role, plays a role in hematopoiesis and immune system development, and participates in the inflammatory response. This chain is Protein FAM76B (fam76b), found in Danio rerio (Zebrafish).